The primary structure comprises 148 residues: Small ribosomal subunit protein eS6 (148 aa).

It belongs to the eukaryotic ribosomal protein eS6 family.

The polypeptide is Small ribosomal subunit protein eS6 (Pyrobaculum aerophilum (strain ATCC 51768 / DSM 7523 / JCM 9630 / CIP 104966 / NBRC 100827 / IM2)).